A 168-amino-acid polypeptide reads, in one-letter code: Thiol peroxidase (168 aa).

In terms of domain architecture, Thioredoxin spans 19–168 (PQAGSKAQAF…YDAALNVLKA (150 aa)). Cys61 (cysteine sulfenic acid (-SOH) intermediate) is an active-site residue. A disulfide bridge connects residues Cys61 and Cys95.

Belongs to the peroxiredoxin family. Tpx subfamily. Homodimer.

It catalyses the reaction a hydroperoxide + [thioredoxin]-dithiol = an alcohol + [thioredoxin]-disulfide + H2O. Thiol-specific peroxidase that catalyzes the reduction of hydrogen peroxide and organic hydroperoxides to water and alcohols, respectively. Plays a role in cell protection against oxidative stress by detoxifying peroxides. This chain is Thiol peroxidase, found in Salmonella typhi.